A 512-amino-acid polypeptide reads, in one-letter code: MEEFKRYLDLDTSRQHDFLYPLIFQEYIYALAHDHSLTRSNSLELEKAGYDNNSSLLIVKRLITHLITQMDRQNHLSFLTNDSSQNPFFGHNTALYSQIILEGFVVVVEIPFSIRVISSLDLEGKERVKSHNFRSIHSVFPFLEDKFSHLIYVLDLLIPQSIHLEILIQTLRYWVKDASSLHLLRAFLHKYHNWKNLITPKKSSFSFSKRNKRFFFFFYNFHVYEYESILAFICNQSSHLQSKSYRPFLDRIYFYEKRDHFVEVFTKYFQAVLWSFNDPFMHYVRYQGKALLASKGTFLLMNKWNYYLVNFWQCYFYMWSQPGRIHINKLSNHYLELLGYLSSVGLNSSMVRNQMLENAFLIANASKKFDTTVPIIPLIRSFSKAKFCNLLGHPISKPIWTDLSDSDIIDRFGCIYRNISHYYSGSSQKMSLYRIKYIIKLSCARTLARKHKSTVRAFLKRVGLEFLEEFFLEDEFMFSLTFPKASYISGGLYRMRIWYLDIFCIHDLANHK.

The protein belongs to the intron maturase 2 family. MatK subfamily.

It is found in the plastid. The protein localises to the chloroplast. Usually encoded in the trnK tRNA gene intron. Probably assists in splicing its own and other chloroplast group II introns. The protein is Maturase K of Soldanella alpina (Alpine snowbell).